We begin with the raw amino-acid sequence, 861 residues long: Glucans biosynthesis glucosyltransferase H (861 aa).

The next 6 membrane-spanning stretches (helical) occupy residues 142 to 162 (FILL…MKGI), 188 to 208 (VLPY…FCWV), 516 to 536 (VFLT…FLVL), 573 to 593 (LFST…MLIW), 600 to 620 (FGGV…SVLL), and 683 to 703 (FLWW…VSVI).

It belongs to the glycosyltransferase 2 family. OpgH subfamily.

It localises to the cell inner membrane. It participates in glycan metabolism; osmoregulated periplasmic glucan (OPG) biosynthesis. Its function is as follows. Involved in the biosynthesis of osmoregulated periplasmic glucans (OPGs). In Pseudomonas aeruginosa (strain UCBPP-PA14), this protein is Glucans biosynthesis glucosyltransferase H.